The sequence spans 478 residues: V-type ATP synthase beta chain (478 aa).

The protein belongs to the ATPase alpha/beta chains family.

Its function is as follows. Produces ATP from ADP in the presence of a proton gradient across the membrane. The V-type beta chain is a regulatory subunit. The protein is V-type ATP synthase beta chain of Thermus thermophilus (strain ATCC BAA-163 / DSM 7039 / HB27).